The sequence spans 305 residues: Aspartate carbamoyltransferase catalytic subunit (305 aa).

Carbamoyl phosphate-binding residues include Arg-51 and Thr-52. Lys-79 contributes to the L-aspartate binding site. Carbamoyl phosphate-binding residues include Arg-101, His-130, and Gln-133. Residues Arg-163 and Arg-215 each coordinate L-aspartate. 2 residues coordinate carbamoyl phosphate: Gly-256 and Pro-257.

Belongs to the aspartate/ornithine carbamoyltransferase superfamily. ATCase family. Heterododecamer (2C3:3R2) of six catalytic PyrB chains organized as two trimers (C3), and six regulatory PyrI chains organized as three dimers (R2).

It catalyses the reaction carbamoyl phosphate + L-aspartate = N-carbamoyl-L-aspartate + phosphate + H(+). Its pathway is pyrimidine metabolism; UMP biosynthesis via de novo pathway; (S)-dihydroorotate from bicarbonate: step 2/3. Catalyzes the condensation of carbamoyl phosphate and aspartate to form carbamoyl aspartate and inorganic phosphate, the committed step in the de novo pyrimidine nucleotide biosynthesis pathway. The chain is Aspartate carbamoyltransferase catalytic subunit from Ehrlichia canis (strain Jake).